The sequence spans 504 residues: Maturase K (504 aa).

This sequence belongs to the intron maturase 2 family. MatK subfamily.

The protein resides in the plastid. The protein localises to the chloroplast. Functionally, usually encoded in the trnK tRNA gene intron. Probably assists in splicing its own and other chloroplast group II introns. The protein is Maturase K of Arabidopsis halleri.